We begin with the raw amino-acid sequence, 213 residues long: Orotate phosphoribosyltransferase (213 aa).

Lysine 26 contacts 5-phospho-alpha-D-ribose 1-diphosphate. Residue 34–35 coordinates orotate; it reads FF. Residues 72–73, arginine 99, lysine 100, lysine 103, histidine 105, and 124–132 contribute to the 5-phospho-alpha-D-ribose 1-diphosphate site; these read YK and DDVITAGTA. Threonine 128 and arginine 156 together coordinate orotate.

Belongs to the purine/pyrimidine phosphoribosyltransferase family. PyrE subfamily. As to quaternary structure, homodimer. Mg(2+) is required as a cofactor.

It catalyses the reaction orotidine 5'-phosphate + diphosphate = orotate + 5-phospho-alpha-D-ribose 1-diphosphate. Its pathway is pyrimidine metabolism; UMP biosynthesis via de novo pathway; UMP from orotate: step 1/2. Catalyzes the transfer of a ribosyl phosphate group from 5-phosphoribose 1-diphosphate to orotate, leading to the formation of orotidine monophosphate (OMP). This is Orotate phosphoribosyltransferase from Vibrio cholerae serotype O1 (strain ATCC 39315 / El Tor Inaba N16961).